A 366-amino-acid chain; its full sequence is Aminomethyltransferase (366 aa).

The protein belongs to the GcvT family. In terms of assembly, the glycine cleavage system is composed of four proteins: P, T, L and H.

The catalysed reaction is N(6)-[(R)-S(8)-aminomethyldihydrolipoyl]-L-lysyl-[protein] + (6S)-5,6,7,8-tetrahydrofolate = N(6)-[(R)-dihydrolipoyl]-L-lysyl-[protein] + (6R)-5,10-methylene-5,6,7,8-tetrahydrofolate + NH4(+). Its function is as follows. The glycine cleavage system catalyzes the degradation of glycine. This chain is Aminomethyltransferase, found in Bacillus cereus (strain ZK / E33L).